The chain runs to 100 residues: Ferredoxin (100 aa).

A propeptide spanning residues 1 to 8 (MLSQVCRF) is cleaved from the precursor. The 92-residue stretch at 9 to 100 (GTITAVKGGV…GENDGAVFEL (92 aa)) folds into the 2Fe-2S ferredoxin-type domain. Residues cysteine 46, cysteine 52, cysteine 55, and cysteine 85 each coordinate [2Fe-2S] cluster.

Requires [2Fe-2S] cluster as cofactor.

It is found in the hydrogenosome. Ferredoxins are iron-sulfur proteins that transfer electrons in a wide variety of metabolic reactions. It links pyruvate:ferredoxin oxidoreductase to hydrogenase. In Trichomonas vaginalis, this protein is Ferredoxin.